Consider the following 482-residue polypeptide: Proton extrusion protein PxcA (482 aa).

Transmembrane regions (helical) follow at residues 265 to 285, 359 to 379, 406 to 426, and 442 to 462; these read FVLG…NLVI, PLKN…YFVL, IIIL…WEVI, and FINM…KYWI.

Belongs to the CemA family.

It localises to the cell inner membrane. Its function is as follows. Required for H(+) efflux immediately after light irradiation to form a rapid H(+) concentration gradient across the thylakoid membranes. Together with PxcL, contributes to transient H(+) uptake following dark to light transition. The chain is Proton extrusion protein PxcA from Acaryochloris marina (strain MBIC 11017).